A 518-amino-acid polypeptide reads, in one-letter code: Glutamate--cysteine ligase (518 aa).

Belongs to the glutamate--cysteine ligase type 1 family. Type 1 subfamily.

It catalyses the reaction L-cysteine + L-glutamate + ATP = gamma-L-glutamyl-L-cysteine + ADP + phosphate + H(+). Its pathway is sulfur metabolism; glutathione biosynthesis; glutathione from L-cysteine and L-glutamate: step 1/2. This Buchnera aphidicola subsp. Acyrthosiphon pisum (strain APS) (Acyrthosiphon pisum symbiotic bacterium) protein is Glutamate--cysteine ligase (gshA).